Reading from the N-terminus, the 198-residue chain is Probable GTP-binding protein EngB (198 aa).

Residues 22 to 195 (DLPEIALAGR…WKAIHKFTKT (174 aa)) form the EngB-type G domain. GTP contacts are provided by residues 30-37 (GRSNVGKS), 57-61 (GKTQT), 75-78 (DVPG), 142-145 (TKAD), and 174-176 (FSS). Residues Ser-37 and Thr-59 each coordinate Mg(2+).

Belongs to the TRAFAC class TrmE-Era-EngA-EngB-Septin-like GTPase superfamily. EngB GTPase family. Requires Mg(2+) as cofactor.

In terms of biological role, necessary for normal cell division and for the maintenance of normal septation. The sequence is that of Probable GTP-binding protein EngB from Bacillus cytotoxicus (strain DSM 22905 / CIP 110041 / 391-98 / NVH 391-98).